The primary structure comprises 306 residues: Porphobilinogen deaminase (306 aa).

Cysteine 239 carries the post-translational modification S-(dipyrrolylmethanemethyl)cysteine.

Belongs to the HMBS family. As to quaternary structure, monomer. Dipyrromethane is required as a cofactor.

The catalysed reaction is 4 porphobilinogen + H2O = hydroxymethylbilane + 4 NH4(+). The protein operates within porphyrin-containing compound metabolism; protoporphyrin-IX biosynthesis; coproporphyrinogen-III from 5-aminolevulinate: step 2/4. Tetrapolymerization of the monopyrrole PBG into the hydroxymethylbilane pre-uroporphyrinogen in several discrete steps. The sequence is that of Porphobilinogen deaminase from Helicobacter acinonychis (strain Sheeba).